Reading from the N-terminus, the 186-residue chain is Adenylate kinase (186 aa).

Position 10-15 (10-15 (GVGKGT)) interacts with ATP. Residues 30 to 59 (STGDIFRYNIKNKTELGLEAMSYTDKGELV) form an NMP region. AMP is bound by residues threonine 31, arginine 36, 57–59 (ELV), 85–88 (GYPR), and glutamine 92. The LID stretch occupies residues 126–136 (KRAAEQGRADD). Arginine 127 is a binding site for ATP. Residues arginine 133 and arginine 144 each coordinate AMP. Residue glycine 172 coordinates ATP.

This sequence belongs to the adenylate kinase family. In terms of assembly, monomer.

It localises to the cytoplasm. The catalysed reaction is AMP + ATP = 2 ADP. It participates in purine metabolism; AMP biosynthesis via salvage pathway; AMP from ADP: step 1/1. In terms of biological role, catalyzes the reversible transfer of the terminal phosphate group between ATP and AMP. Plays an important role in cellular energy homeostasis and in adenine nucleotide metabolism. The polypeptide is Adenylate kinase (Bifidobacterium longum (strain NCC 2705)).